The following is a 312-amino-acid chain: Ribosomal RNA small subunit methyltransferase H (312 aa).

S-adenosyl-L-methionine is bound by residues 33–35 (GGH), Asp53, Phe80, Asp102, and Gln109.

The protein belongs to the methyltransferase superfamily. RsmH family.

The protein resides in the cytoplasm. The catalysed reaction is cytidine(1402) in 16S rRNA + S-adenosyl-L-methionine = N(4)-methylcytidine(1402) in 16S rRNA + S-adenosyl-L-homocysteine + H(+). Specifically methylates the N4 position of cytidine in position 1402 (C1402) of 16S rRNA. This Heliobacterium mobile (Heliobacillus mobilis) protein is Ribosomal RNA small subunit methyltransferase H.